Here is a 215-residue protein sequence, read N- to C-terminus: LexA repressor (215 aa).

Residues 29 to 49 (VREICSAVGFKSTSTVHSYLQ) constitute a DNA-binding region (H-T-H motif). Active-site for autocatalytic cleavage activity residues include Ser-138 and Lys-175.

Belongs to the peptidase S24 family. As to quaternary structure, homodimer.

It catalyses the reaction Hydrolysis of Ala-|-Gly bond in repressor LexA.. In terms of biological role, represses a number of genes involved in the response to DNA damage (SOS response), including recA and lexA. In the presence of single-stranded DNA, RecA interacts with LexA causing an autocatalytic cleavage which disrupts the DNA-binding part of LexA, leading to derepression of the SOS regulon and eventually DNA repair. This chain is LexA repressor, found in Ruminiclostridium cellulolyticum (strain ATCC 35319 / DSM 5812 / JCM 6584 / H10) (Clostridium cellulolyticum).